The following is a 524-amino-acid chain: Bifunctional purine biosynthesis protein PurH (524 aa).

In terms of domain architecture, MGS-like spans 1 to 145; the sequence is MIQQALLSVS…KNHRDVTVIV (145 aa).

It belongs to the PurH family.

It catalyses the reaction (6R)-10-formyltetrahydrofolate + 5-amino-1-(5-phospho-beta-D-ribosyl)imidazole-4-carboxamide = 5-formamido-1-(5-phospho-D-ribosyl)imidazole-4-carboxamide + (6S)-5,6,7,8-tetrahydrofolate. The enzyme catalyses IMP + H2O = 5-formamido-1-(5-phospho-D-ribosyl)imidazole-4-carboxamide. It participates in purine metabolism; IMP biosynthesis via de novo pathway; 5-formamido-1-(5-phospho-D-ribosyl)imidazole-4-carboxamide from 5-amino-1-(5-phospho-D-ribosyl)imidazole-4-carboxamide (10-formyl THF route): step 1/1. Its pathway is purine metabolism; IMP biosynthesis via de novo pathway; IMP from 5-formamido-1-(5-phospho-D-ribosyl)imidazole-4-carboxamide: step 1/1. The polypeptide is Bifunctional purine biosynthesis protein PurH (Ralstonia pickettii (strain 12J)).